The sequence spans 206 residues: Ion-translocating oxidoreductase complex subunit G (206 aa).

The chain crosses the membrane as a helical span at residues 9-29 (GITLALFAAGSTGLTAAINQM). Residue T174 is modified to FMN phosphoryl threonine.

The protein belongs to the RnfG family. The complex is composed of six subunits: RsxA, RsxB, RsxC, RsxD, RsxE and RsxG. The cofactor is FMN.

The protein resides in the cell inner membrane. Its function is as follows. Part of a membrane-bound complex that couples electron transfer with translocation of ions across the membrane. Required to maintain the reduced state of SoxR. Probably transfers electron from NAD(P)H to SoxR. The chain is Ion-translocating oxidoreductase complex subunit G from Escherichia coli (strain K12).